Reading from the N-terminus, the 229-residue chain is Potassium/proton antiporter CemA (229 aa).

3 consecutive transmembrane segments (helical) span residues 7 to 27, 114 to 134, and 189 to 209; these read FTPLLYLASLVFLPWWISLSF, IICFVILSGYSIWGNEELVIL, and ILSGLVSTFPVILDTLFKFWI.

The protein belongs to the CemA family.

It localises to the plastid. It is found in the chloroplast inner membrane. The enzyme catalyses K(+)(in) + H(+)(out) = K(+)(out) + H(+)(in). In terms of biological role, contributes to K(+)/H(+) antiport activity by supporting proton efflux to control proton extrusion and homeostasis in chloroplasts in a light-dependent manner to modulate photosynthesis. Prevents excessive induction of non-photochemical quenching (NPQ) under continuous-light conditions. Indirectly promotes efficient inorganic carbon uptake into chloroplasts. The chain is Potassium/proton antiporter CemA from Panax ginseng (Korean ginseng).